A 256-amino-acid polypeptide reads, in one-letter code: Ubiquinone/menaquinone biosynthesis C-methyltransferase UbiE (256 aa).

S-adenosyl-L-methionine is bound by residues threonine 79, aspartate 100, and 128-129 (DA).

It belongs to the class I-like SAM-binding methyltransferase superfamily. MenG/UbiE family.

The catalysed reaction is a 2-demethylmenaquinol + S-adenosyl-L-methionine = a menaquinol + S-adenosyl-L-homocysteine + H(+). The enzyme catalyses a 2-methoxy-6-(all-trans-polyprenyl)benzene-1,4-diol + S-adenosyl-L-methionine = a 5-methoxy-2-methyl-3-(all-trans-polyprenyl)benzene-1,4-diol + S-adenosyl-L-homocysteine + H(+). It functions in the pathway quinol/quinone metabolism; menaquinone biosynthesis; menaquinol from 1,4-dihydroxy-2-naphthoate: step 2/2. Its pathway is cofactor biosynthesis; ubiquinone biosynthesis. Functionally, methyltransferase required for the conversion of demethylmenaquinol (DMKH2) to menaquinol (MKH2) and the conversion of 2-polyprenyl-6-methoxy-1,4-benzoquinol (DDMQH2) to 2-polyprenyl-3-methyl-6-methoxy-1,4-benzoquinol (DMQH2). The polypeptide is Ubiquinone/menaquinone biosynthesis C-methyltransferase UbiE (Ectopseudomonas mendocina (strain ymp) (Pseudomonas mendocina)).